A 388-amino-acid chain; its full sequence is Methylthioribose-1-phosphate isomerase (388 aa).

The active-site Proton donor is Asp-258.

Belongs to the eIF-2B alpha/beta/delta subunits family. MtnA subfamily.

It is found in the cytoplasm. Its subcellular location is the nucleus. It carries out the reaction 5-(methylsulfanyl)-alpha-D-ribose 1-phosphate = 5-(methylsulfanyl)-D-ribulose 1-phosphate. Its pathway is amino-acid biosynthesis; L-methionine biosynthesis via salvage pathway; L-methionine from S-methyl-5-thio-alpha-D-ribose 1-phosphate: step 1/6. Functionally, catalyzes the interconversion of methylthioribose-1-phosphate (MTR-1-P) into methylthioribulose-1-phosphate (MTRu-1-P). This Neurospora crassa (strain ATCC 24698 / 74-OR23-1A / CBS 708.71 / DSM 1257 / FGSC 987) protein is Methylthioribose-1-phosphate isomerase (mri-1).